A 425-amino-acid chain; its full sequence is CDP-diacylglycerol--serine O-phosphatidyltransferase 1 (425 aa).

The span at Met1 to Leu16 shows a compositional bias: basic and acidic residues. The tract at residues Met1–Gly23 is disordered. 9 helical membrane-spanning segments follow: residues Thr42–Pro62, Trp79–Ile99, Ile105–Phe125, Pro197–Leu217, Ser227–Val247, Phe296–Leu316, Trp321–Ile341, Gly361–Phe381, and Met390–Leu410.

The protein belongs to the CDP-alcohol phosphatidyltransferase class-I family. As to expression, expressed in trichomes, leaf veins and root vasculature.

It is found in the endoplasmic reticulum membrane. The protein localises to the nucleus envelope. The catalysed reaction is a CDP-1,2-diacyl-sn-glycerol + L-serine = a 1,2-diacyl-sn-glycero-3-phospho-L-serine + CMP + H(+). It functions in the pathway phospholipid metabolism; phosphatidylethanolamine biosynthesis; phosphatidylethanolamine from CDP-diacylglycerol: step 1/2. Functionally, catalyzes a base-exchange reaction in which the polar head group of phosphatidylethanolamine (PE) or phosphatidylcholine (PC) is replaced by L-serine. Is essential for phosphatidylserine (PS) biosynthesis and PE seems to be the most plausible substrate. Plays an important role in microspore maturation. This is CDP-diacylglycerol--serine O-phosphatidyltransferase 1 (PSS1) from Arabidopsis thaliana (Mouse-ear cress).